The chain runs to 982 residues: Mineralocorticoid receptor (982 aa).

Residues 1–601 (METKGYHSLP…STGSSRPSKI (601 aa)) are modulating. The segment covering 230 to 242 (QGTPLTCSPNVEN) has biased composition (polar residues). Disordered stretches follow at residues 230 to 328 (QGTP…AAST) and 345 to 375 (SGTSAGSSTSRDVVPSPDTQEKGAQEVPFPK). 5 positions are modified to phosphoserine: Ser249, Ser258, Ser282, Ser286, and Ser298. The span at 258 to 299 (SPLSSPLSSMKSSISSPPSHCSVKSPVSSPNNVTPRSSVSSP) shows a compositional bias: low complexity. Polar residues predominate over residues 300 to 328 (ANINNSRCSVSSPSNTNNRSTLSSPAAST). Positions 345–354 (SGTSAGSSTS) are enriched in low complexity. Zn(2+) is bound by residues Cys602, Cys605, Cys619, Cys622, Cys638, Cys644, Cys654, and Cys657. 2 consecutive NR C4-type zinc fingers follow at residues 602–622 (CLVCGDEASGCHYGVVTCGSC) and 638–662 (CAGRNDCIIDKIRRKNCPACRLQKC). Positions 602 to 667 (CLVCGDEASG…RLQKCLQAGM (66 aa)) form a DNA-binding region, nuclear receptor. Positions 668-723 (NLGARRSKKLGKLKGIHEEQPQQQPPPPPPPPQSPEEGTTYIAPAKEPSVNTALVP) are hinge. The interval 682–708 (GIHEEQPQQQPPPPPPPPQSPEEGTTY) is disordered. Over residues 690-701 (QQPPPPPPPPQS) the composition is skewed to pro residues. Residues 724 to 962 (QLSAISRALT…EFPAMLVEII (239 aa)) form the NR LBD domain. 21-hydroxyprogesterone contacts are provided by Asn768 and Gln774. Aldosterone is bound by residues Asn768 and Gln774. Residues Asn768 and Gln774 each contribute to the progesterone site. Residues 780-783 (KWAK) form an important for coactivator binding region. The 21-hydroxyprogesterone site is built by Arg815 and Thr943. Residues Arg815 and Thr943 each contribute to the aldosterone site. 2 residues coordinate progesterone: Arg815 and Thr943.

The protein belongs to the nuclear hormone receptor family. NR3 subfamily. Phosphorylated. Expressed in hippocampus, being restricted to the more superficial cortical layers.

The protein resides in the cytoplasm. It is found in the nucleus. In terms of biological role, receptor for both mineralocorticoids (MC) such as aldosterone and glucocorticoids (GC) such as corticosterone or cortisol. Binds to mineralocorticoid response elements (MRE) and transactivates target genes. The effect of MC is to increase ion and water transport and thus raise extracellular fluid volume and blood pressure and lower potassium levels. This Saimiri sciureus (Common squirrel monkey) protein is Mineralocorticoid receptor (NR3C2).